The sequence spans 316 residues: Annexin A13 (316 aa).

The N-myristoyl glycine moiety is linked to residue Gly2. 4 Annexin repeats span residues 14–85 (FDVD…ALLD), 86–157 (RPSE…SLLQ), 169–241 (DLAG…TLVR), and 245–316 (DCED…ALLH).

It belongs to the annexin family. In terms of assembly, monomer and homodimer. Detected in epithelial cells in colon and jejunum (at protein level). Detected in epithelial cells in jejunum.

It localises to the apical cell membrane. Its subcellular location is the cell membrane. It is found in the cytoplasmic vesicle. Binds to membranes enriched in phosphatidylserine or phosphatidylglycerol in a calcium-dependent manner. Half-maximal membrane binding requires about 60 uM calcium. Does not bind to membranes that lack phospholipids with an acidic headgroup. Its function is as follows. Binds to membranes enriched in phosphatidylserine or phosphatidylglycerol in a calcium-dependent manner, but requires higher calcium levels for membrane binding than isoform A. Half-maximal membrane binding requires about 320 uM calcium. This Homo sapiens (Human) protein is Annexin A13 (ANXA13).